Here is a 914-residue protein sequence, read N- to C-terminus: Caprin-2 (914 aa).

Disordered stretches follow at residues 259 to 283 (PLPKSDSQEKTETIKPDSQSRPSGL), 298 to 326 (EFLNRRYMPETDERRRGETASPRNWKEDF), 367 to 411 (KTVD…LPKD), 439 to 480 (DGES…SSQR), 495 to 529 (CLSNGDRSINGSDLELHSEDKPRKQAEGFNSPPLY), 608 to 631 (HRSFTSAKTSSVTTASTQTPPELN), and 718 to 747 (GAGTATQRSSAGWSDSSQVSSPDRDGAYPL). Over residues 264–273 (DSQEKTETIK) the composition is skewed to basic and acidic residues. Over residues 274–283 (PDSQSRPSGL) the composition is skewed to polar residues. Residues 370–392 (DIVKRSTTDPKEKRQRKKAEQDS) show a composition bias toward basic and acidic residues. Polar residues predominate over residues 469-480 (KSPSDILPSSQR). Over residues 508-520 (LELHSEDKPRKQA) the composition is skewed to basic and acidic residues. Low complexity predominate over residues 610–626 (SFTSAKTSSVTTASTQT). The span at 718–738 (GAGTATQRSSAGWSDSSQVSS) shows a compositional bias: polar residues. Positions 780–914 (LTQLRVAFSA…TFSGFLLYQD (135 aa)) constitute a C1q domain. 2 residues coordinate Ca(2+): aspartate 865 and glutamate 871.

Belongs to the caprin family. In terms of assembly, homotrimer; via C1q domain.

Its subcellular location is the cytoplasm. The protein localises to the cell membrane. Functionally, promotes phosphorylation of the Wnt coreceptor LRP6, leading to increased activity of the canonical Wnt signaling pathway. Facilitates constitutive LRP6 phosphorylation by CDK14/CCNY during G2/M stage of the cell cycle, which may potentiate cells for Wnt signaling. May regulate the transport and translation of mRNAs, modulating for instance the expression of proteins involved in synaptic plasticity in neurons. Involved in regulation of growth as erythroblasts shift from a highly proliferative state towards their terminal phase of differentiation. May be involved in apoptosis. The chain is Caprin-2 from Danio rerio (Zebrafish).